An 81-amino-acid polypeptide reads, in one-letter code: Sulfur carrier protein TusA (81 aa).

Residue Cys19 is the Cysteine persulfide intermediate of the active site.

This sequence belongs to the sulfur carrier protein TusA family. Interacts with IscS.

The protein resides in the cytoplasm. The protein operates within tRNA modification. Sulfur carrier protein involved in sulfur trafficking in the cell. Part of a sulfur-relay system required for 2-thiolation during synthesis of 2-thiouridine of the modified wobble base 5-methylaminomethyl-2-thiouridine (mnm(5)s(2)U) in tRNA. Interacts with IscS and stimulates its cysteine desulfurase activity. Accepts an activated sulfur from IscS, which is then transferred to TusD, and thus determines the direction of sulfur flow from IscS to 2-thiouridine formation. Also appears to be involved in sulfur transfer for the biosynthesis of molybdopterin. In Citrobacter koseri (strain ATCC BAA-895 / CDC 4225-83 / SGSC4696), this protein is Sulfur carrier protein TusA.